The chain runs to 511 residues: E3 ubiquitin-protein ligase TRIM7 (511 aa).

The RING-type zinc finger occupies 29 to 82; sequence CSICLELFREPVSVECGHSFCRACIGRCWERPGAGSVGAATRAPPFPLPCPQCR. A Phosphoserine; by RPS6KA5 modification is found at serine 107. The segment at 125–166 adopts a B box-type zinc-finger fold; the sequence is AAAARCGQHGEPFKLYCQDDGRAICVVCDRAREHREHAVLPL. Positions 130, 133, 152, and 158 each coordinate Zn(2+). A coiled-coil region spans residues 166-263; that stretch reads LDEAVQEAKE…AQLGVEITQL (98 aa). The region spanning 324–511 is the B30.2/SPRY domain; the sequence is MLKKFKEDLR…STGTYLRIWP (188 aa).

The protein belongs to the TRIM/RBCC family. In terms of assembly, forms homodimers. Interacts with GNIP2. Interacts with GYG1. Interacts with RNF187 (via C-terminus). Phosphorylated at Ser-107 by RPS6KA5/MSK1, which stimulates the ubiquitin ligase activity. Post-translationally, auto-ubiquitinates via 'Lys-63'-linked polyubiquitination. In terms of tissue distribution, skeletal muscle and placenta, at lower levels in heart, brain and pancreas. Isoform 1 is widely expressed with high level in testis, kidney and heart.

The protein localises to the nucleus. The protein resides in the cytoplasm. It is found in the golgi apparatus. It carries out the reaction S-ubiquitinyl-[E2 ubiquitin-conjugating enzyme]-L-cysteine + [acceptor protein]-L-lysine = [E2 ubiquitin-conjugating enzyme]-L-cysteine + N(6)-ubiquitinyl-[acceptor protein]-L-lysine.. The protein operates within protein modification; protein ubiquitination. In terms of biological role, E3 ubiquitin-protein ligase that have both tumor-promoting and tumor-suppressing activities and functions in several biological processes including innate immunity, regulation of ferroptosis as well as cell proliferation and migration. Acts as an antiviral effector against multiple viruses by targeting specific viral proteins for ubiquitination and degradation including norovirus NTPase protein or SARS-CoV-2 NSP5 and NSP8 proteins. Mechanistically, recognizes the C-terminal glutamine-containing motif usually generated by viral proteases that process the polyproteins and trigger their ubiquitination and subsequent degradation. Mediates 'Lys-63'-linked polyubiquitination and stabilization of the JUN coactivator RNF187 in response to growth factor signaling via the MEK/ERK pathway, thereby regulating JUN transactivation and cellular proliferation. Promotes the TLR4-mediated signaling activation through its E3 ligase domain leading to production of pro-inflammatory cytokines and type I interferon. Also plays a negative role in the regulation of exogenous cytosolic DNA virus-triggered immune response. Mechanistically, enhances the 'Lys-48'-linked ubiquitination of STING1 leading to its proteasome-dependent degradation. Mediates the ubiquitination of the SIN3-HDAC chromatin remodeling complex component BRMS1. Modulates NCOA4-mediated ferritinophagy and ferroptosis in glioblastoma cells by ubiquitinating NCOA4, leading to its degradation. (Microbial infection) Promotes Zika virus replication by mediating envelope protein E ubiquitination. This is E3 ubiquitin-protein ligase TRIM7 (TRIM7) from Homo sapiens (Human).